The sequence spans 98 residues: Large ribosomal subunit protein uL23 (98 aa).

It belongs to the universal ribosomal protein uL23 family. As to quaternary structure, part of the 50S ribosomal subunit. Contacts protein L29, and trigger factor when it is bound to the ribosome.

In terms of biological role, one of the early assembly proteins it binds 23S rRNA. One of the proteins that surrounds the polypeptide exit tunnel on the outside of the ribosome. Forms the main docking site for trigger factor binding to the ribosome. This is Large ribosomal subunit protein uL23 from Borreliella afzelii (strain PKo) (Borrelia afzelii).